We begin with the raw amino-acid sequence, 338 residues long: Taste receptor type 2 member 39 (338 aa).

Over 1 to 30 (MLGRCFPPNTKEKQQLRMIKLCDPAESELS) the chain is Extracellular. A helical membrane pass occupies residues 31 to 51 (PFLITLTLAVLLAEYLTGIIA). Topologically, residues 52 to 74 (NGFITAIHAAECVQNKSVSTSGR) are cytoplasmic. The helical transmembrane segment at 75 to 95 (ILVFLSVSRIALQSLMMLEIT) threads the bilayer. Topologically, residues 96–116 (ISSTSLSFYSEDTVYYAFKIS) are extracellular. Residues 117 to 137 (FIFLNFCSLWFAAWLSFFYFV) traverse the membrane as a helical segment. The Cytoplasmic portion of the chain corresponds to 138-156 (KIANFSYPLFLKLRWRISG). A helical membrane pass occupies residues 157–177 (LIPWLLWLSVFISFSHSMFCI). The Extracellular segment spans residues 178-205 (NICTGYCDNSFPIHSSNSTEKTYFSEIS). Asparagine 194 carries N-linked (GlcNAc...) asparagine glycosylation. The chain crosses the membrane as a helical span at residues 206-226 (VVSLAFFFNLGIVIPLIMFIL). The Cytoplasmic segment spans residues 227–262 (AAILLILSLKRHTLYMXSNATGSKDPSMEAHIGAIK). The chain crosses the membrane as a helical span at residues 263-283 (ATSYFLILYIFNAVALFIYLS). Residues 284 to 291 (NMFDINSL) are Extracellular-facing. The helical transmembrane segment at 292–312 (WNTLCQIIMAAYPASHSILLI) threads the bilayer. The Cytoplasmic segment spans residues 313-338 (KDNPGLRRAWKQLQHRLHLYPKEWTL).

The protein belongs to the G-protein coupled receptor T2R family.

The protein localises to the membrane. Receptor that may play a role in the perception of bitterness and is gustducin-linked. May play a role in sensing the chemical composition of the gastrointestinal content. The activity of this receptor may stimulate alpha gustducin, mediate PLC-beta-2 activation and lead to the gating of TRPM5. This is Taste receptor type 2 member 39 (TAS2R39) from Papio hamadryas (Hamadryas baboon).